A 146-amino-acid chain; its full sequence is Large ribosomal subunit protein uL15 (146 aa).

The interval 1–58 (MNLSELRPAPGARKKPTRKGQGIGSGLGKTAGKGHKGQNARSGGGVRPGFEGGQMPLQ) is disordered. Gly residues-rich tracts occupy residues 21-31 (QGIGSGLGKTA) and 42-52 (SGGGVRPGFEG).

The protein belongs to the universal ribosomal protein uL15 family. Part of the 50S ribosomal subunit.

Functionally, binds to the 23S rRNA. The sequence is that of Large ribosomal subunit protein uL15 from Desulforamulus reducens (strain ATCC BAA-1160 / DSM 100696 / MI-1) (Desulfotomaculum reducens).